The following is a 420-amino-acid chain: uncharacterized protein (420 aa).

Positions 1 to 25 (MRYAMNKIPALLLVGALIIATVASG) are cleaved as a signal peptide. Position 26 is an N-acetylcysteine (C26). Residue C26 is the site of S-archaeol cysteine attachment.

This sequence belongs to the bacterial solute-binding protein 1 family.

The protein resides in the cell membrane. Its function is as follows. Probably part of a binding-protein-dependent transport system PH1036/38/39. This is an uncharacterized protein from Pyrococcus horikoshii (strain ATCC 700860 / DSM 12428 / JCM 9974 / NBRC 100139 / OT-3).